The primary structure comprises 125 residues: Large ribosomal subunit protein uL22c (125 aa).

Belongs to the universal ribosomal protein uL22 family. As to quaternary structure, part of the 50S ribosomal subunit.

It is found in the plastid. The protein localises to the chloroplast. In terms of biological role, this protein binds specifically to 23S rRNA. Its function is as follows. The globular domain of the protein is located near the polypeptide exit tunnel on the outside of the subunit, while an extended beta-hairpin is found that lines the wall of the exit tunnel in the center of the 70S ribosome. The sequence is that of Large ribosomal subunit protein uL22c (rpl22) from Nymphaea alba (White water-lily).